Consider the following 297-residue polypeptide: Large ribosomal subunit protein uL18 (297 aa).

An N-acetylglycine modification is found at Gly-2. An N6-acetyllysine mark is found at Lys-5 and Lys-48. Ser-185 carries the phosphoserine modification. Lys-220 is modified (N6-acetyllysine; alternate). Lys-220 is covalently cross-linked (Glycyl lysine isopeptide (Lys-Gly) (interchain with G-Cter in SUMO1); alternate). Residue Lys-220 forms a Glycyl lysine isopeptide (Lys-Gly) (interchain with G-Cter in SUMO2); alternate linkage. Thr-232 carries the phosphothreonine modification. Positions 253-297 (YEKKPKREVKKKRWNRPKMSLAQKKDRVAQKKASFLRAQERAAES) are disordered. Positions 258-268 (KREVKKKRWNR) are enriched in basic residues. Position 272 is a phosphoserine (Ser-272).

This sequence belongs to the universal ribosomal protein uL18 family. As to quaternary structure, component of the large ribosomal subunit (LSU). Part of the 5S RNP complex, which is a LSU subcomplex composed of the 5S RNA, RPL5 and RPL11. Component of a hexameric 5S RNP precursor complex, composed of 5S RNA, RRS1, RPF2/BXDC1, RPL5, RPL11 and HEATR3; this complex acts as a precursor for ribosome assembly. Interacts with NVL in an ATP-dependent manner. Interacts with RRP1B. Interacts with IPO5, IPO7 and KPNB1; these interactions may be involved in RPL5 nuclear import for the assembly of ribosomal subunits. Interacts with RRP1B.

It localises to the cytoplasm. The protein resides in the nucleus. It is found in the nucleolus. Functionally, component of the ribosome, a large ribonucleoprotein complex responsible for the synthesis of proteins in the cell. The small ribosomal subunit (SSU) binds messenger RNAs (mRNAs) and translates the encoded message by selecting cognate aminoacyl-transfer RNA (tRNA) molecules. The large subunit (LSU) contains the ribosomal catalytic site termed the peptidyl transferase center (PTC), which catalyzes the formation of peptide bonds, thereby polymerizing the amino acids delivered by tRNAs into a polypeptide chain. The nascent polypeptides leave the ribosome through a tunnel in the LSU and interact with protein factors that function in enzymatic processing, targeting, and the membrane insertion of nascent chains at the exit of the ribosomal tunnel. As part of the 5S RNP/5S ribonucleoprotein particle it is an essential component of the LSU, required for its formation and the maturation of rRNAs. It also couples ribosome biogenesis to p53/TP53 activation. As part of the 5S RNP it accumulates in the nucleoplasm and inhibits MDM2, when ribosome biogenesis is perturbed, mediating the stabilization and the activation of TP53. The chain is Large ribosomal subunit protein uL18 (Rpl5) from Rattus norvegicus (Rat).